The following is a 119-amino-acid chain: Putative phosphoethanolamine transferase YjgX (119 aa).

The next 2 helical transmembrane spans lie at valine 5 to tryptophan 25 and leucine 94 to tyrosine 114.

The protein belongs to the phosphoethanolamine transferase family.

It localises to the cell inner membrane. In Escherichia coli (strain K12), this protein is Putative phosphoethanolamine transferase YjgX (yjgX).